The sequence spans 301 residues: Ribosomal RNA small subunit methyltransferase H (301 aa).

Residues 25–27 (GGH), aspartate 45, phenylalanine 72, aspartate 94, and glutamine 101 contribute to the S-adenosyl-L-methionine site.

The protein belongs to the methyltransferase superfamily. RsmH family.

It localises to the cytoplasm. The catalysed reaction is cytidine(1402) in 16S rRNA + S-adenosyl-L-methionine = N(4)-methylcytidine(1402) in 16S rRNA + S-adenosyl-L-homocysteine + H(+). Specifically methylates the N4 position of cytidine in position 1402 (C1402) of 16S rRNA. The chain is Ribosomal RNA small subunit methyltransferase H from Methylococcus capsulatus (strain ATCC 33009 / NCIMB 11132 / Bath).